A 251-amino-acid polypeptide reads, in one-letter code: Probable transcriptional regulatory protein Franean1_5147 (251 aa).

The protein belongs to the TACO1 family.

The protein resides in the cytoplasm. The sequence is that of Probable transcriptional regulatory protein Franean1_5147 from Parafrankia sp. (strain EAN1pec).